Reading from the N-terminus, the 220-residue chain is Metalloproteinase inhibitor 2 (220 aa).

Residues 1–26 (MGAAARTLRLALGLLLLATLLRPADA) form the signal peptide. C27 serves as a coordination point for Zn(2+). Involved in metalloproteinase-binding regions lie at residues 27 to 30 (CSCS) and 95 to 96 (SA). 6 disulfides stabilise this stretch: C27–C98, C29–C127, C39–C152, C154–C201, C159–C164, and C172–C193. Positions 27–152 (CSCSPVHPQQ…SLNHRYQMGC (126 aa)) constitute an NTR domain.

Belongs to the protease inhibitor I35 (TIMP) family. In terms of assembly, interacts (via the C-terminal) with MMP2 (via the C-terminal PEX domain); the interaction inhibits the MMP2 activity. The activity of TIMP2 is dependent on the presence of disulfide bonds.

The protein localises to the secreted. In terms of biological role, complexes with metalloproteinases (such as collagenases) and irreversibly inactivates them by binding to their catalytic zinc cofactor. Known to act on MMP-1, MMP-2, MMP-3, MMP-7, MMP-8, MMP-9, MMP-10, MMP-13, MMP-14, MMP-15, MMP-16 and MMP-19. The sequence is that of Metalloproteinase inhibitor 2 (TIMP2) from Homo sapiens (Human).